A 211-amino-acid chain; its full sequence is Glycerol-3-phosphate acyltransferase (211 aa).

5 helical membrane passes run 10 to 30, 63 to 83, 90 to 110, 126 to 146, and 152 to 172; these read FTTWLIFLISYLIGSIPFGLL, ALTLLCDILKGTLVILVIKFL, NIFISLAGFFAFLGHLFPVWL, LGLYWPAAIVFITAWIVLFLI, and LSALIAVIITPIFVHFSYPYL.

This sequence belongs to the PlsY family. As to quaternary structure, probably interacts with PlsX.

It is found in the cell inner membrane. The catalysed reaction is an acyl phosphate + sn-glycerol 3-phosphate = a 1-acyl-sn-glycero-3-phosphate + phosphate. It functions in the pathway lipid metabolism; phospholipid metabolism. Catalyzes the transfer of an acyl group from acyl-phosphate (acyl-PO(4)) to glycerol-3-phosphate (G3P) to form lysophosphatidic acid (LPA). This enzyme utilizes acyl-phosphate as fatty acyl donor, but not acyl-CoA or acyl-ACP. This chain is Glycerol-3-phosphate acyltransferase, found in Bartonella henselae (strain ATCC 49882 / DSM 28221 / CCUG 30454 / Houston 1) (Rochalimaea henselae).